The following is a 176-amino-acid chain: ATP synthase subunit delta (176 aa).

Belongs to the ATPase delta chain family. In terms of assembly, F-type ATPases have 2 components, F(1) - the catalytic core - and F(0) - the membrane proton channel. F(1) has five subunits: alpha(3), beta(3), gamma(1), delta(1), epsilon(1). F(0) has three main subunits: a(1), b(2) and c(10-14). The alpha and beta chains form an alternating ring which encloses part of the gamma chain. F(1) is attached to F(0) by a central stalk formed by the gamma and epsilon chains, while a peripheral stalk is formed by the delta and b chains.

The protein resides in the cell inner membrane. F(1)F(0) ATP synthase produces ATP from ADP in the presence of a proton or sodium gradient. F-type ATPases consist of two structural domains, F(1) containing the extramembraneous catalytic core and F(0) containing the membrane proton channel, linked together by a central stalk and a peripheral stalk. During catalysis, ATP synthesis in the catalytic domain of F(1) is coupled via a rotary mechanism of the central stalk subunits to proton translocation. In terms of biological role, this protein is part of the stalk that links CF(0) to CF(1). It either transmits conformational changes from CF(0) to CF(1) or is implicated in proton conduction. In Campylobacter concisus (strain 13826), this protein is ATP synthase subunit delta.